Reading from the N-terminus, the 685-residue chain is UvrABC system protein C (685 aa).

One can recognise a GIY-YIG domain in the interval 15–93; that stretch reads ALPGVYRYFD…IKTQNPRFNI (79 aa). A UVR domain is found at 214 to 249; sequence QELLQAMEARMMAYSGQLAFEQAAEVRNQMQALSRV. Positions 365 to 388 are enriched in low complexity; sequence AQGGDHAPAAQGGDPPPAASSGGH. Residues 365–391 form a disordered region; the sequence is AQGGDHAPAAQGGDPPPAASSGGHPLR.

It belongs to the UvrC family. As to quaternary structure, interacts with UvrB in an incision complex.

The protein localises to the cytoplasm. In terms of biological role, the UvrABC repair system catalyzes the recognition and processing of DNA lesions. UvrC both incises the 5' and 3' sides of the lesion. The N-terminal half is responsible for the 3' incision and the C-terminal half is responsible for the 5' incision. The chain is UvrABC system protein C from Verminephrobacter eiseniae (strain EF01-2).